Consider the following 300-residue polypeptide: UDP-3-O-acyl-N-acetylglucosamine deacetylase (300 aa).

Residues histidine 76, histidine 235, and aspartate 239 each coordinate Zn(2+). Residue histidine 262 is the Proton donor of the active site.

This sequence belongs to the LpxC family. It depends on Zn(2+) as a cofactor.

The enzyme catalyses a UDP-3-O-[(3R)-3-hydroxyacyl]-N-acetyl-alpha-D-glucosamine + H2O = a UDP-3-O-[(3R)-3-hydroxyacyl]-alpha-D-glucosamine + acetate. It functions in the pathway glycolipid biosynthesis; lipid IV(A) biosynthesis; lipid IV(A) from (3R)-3-hydroxytetradecanoyl-[acyl-carrier-protein] and UDP-N-acetyl-alpha-D-glucosamine: step 2/6. Catalyzes the hydrolysis of UDP-3-O-myristoyl-N-acetylglucosamine to form UDP-3-O-myristoylglucosamine and acetate, the committed step in lipid A biosynthesis. The sequence is that of UDP-3-O-acyl-N-acetylglucosamine deacetylase from Halorhodospira halophila (strain DSM 244 / SL1) (Ectothiorhodospira halophila (strain DSM 244 / SL1)).